Here is a 436-residue protein sequence, read N- to C-terminus: Enolase (436 aa).

Gln-167 contributes to the (2R)-2-phosphoglycerate binding site. The active-site Proton donor is Glu-209. Residues Asp-246, Glu-291, and Asp-318 each coordinate Mg(2+). Residues Lys-343, Arg-372, Ser-373, and Lys-394 each contribute to the (2R)-2-phosphoglycerate site. Lys-343 functions as the Proton acceptor in the catalytic mechanism.

Belongs to the enolase family. Component of the RNA degradosome, a multiprotein complex involved in RNA processing and mRNA degradation. The cofactor is Mg(2+).

It localises to the cytoplasm. It is found in the secreted. The protein resides in the cell surface. It carries out the reaction (2R)-2-phosphoglycerate = phosphoenolpyruvate + H2O. It participates in carbohydrate degradation; glycolysis; pyruvate from D-glyceraldehyde 3-phosphate: step 4/5. Its function is as follows. Catalyzes the reversible conversion of 2-phosphoglycerate (2-PG) into phosphoenolpyruvate (PEP). It is essential for the degradation of carbohydrates via glycolysis. This Haemophilus influenzae (strain 86-028NP) protein is Enolase.